The chain runs to 307 residues: 4-hydroxythreonine-4-phosphate dehydrogenase (307 aa).

The substrate site is built by His126 and Thr127. A divalent metal cation is bound by residues His156, His195, and His251. Lys259, Asn268, and Arg277 together coordinate substrate.

Belongs to the PdxA family. In terms of assembly, homodimer. Zn(2+) is required as a cofactor. It depends on Mg(2+) as a cofactor. The cofactor is Co(2+).

The protein localises to the cytoplasm. It catalyses the reaction 4-(phosphooxy)-L-threonine + NAD(+) = 3-amino-2-oxopropyl phosphate + CO2 + NADH. It participates in cofactor biosynthesis; pyridoxine 5'-phosphate biosynthesis; pyridoxine 5'-phosphate from D-erythrose 4-phosphate: step 4/5. Catalyzes the NAD(P)-dependent oxidation of 4-(phosphooxy)-L-threonine (HTP) into 2-amino-3-oxo-4-(phosphooxy)butyric acid which spontaneously decarboxylates to form 3-amino-2-oxopropyl phosphate (AHAP). This is 4-hydroxythreonine-4-phosphate dehydrogenase from Helicobacter pylori (strain J99 / ATCC 700824) (Campylobacter pylori J99).